Here is a 59-residue protein sequence, read N- to C-terminus: Light-harvesting protein B-800-850 alpha chain A (59 aa).

At 1 to 11 (MNQARIWTVVK) the chain is on the cytoplasmic side. Residues 12-35 (PTVGLPLLLGSVTVIAILVHFAVL) form a helical membrane-spanning segment. His31 is an a bacteriochlorophyll binding site. Residues 36–59 (SHTTWFSKYWNGKAAAIESSVNVG) lie on the Periplasmic side of the membrane.

The protein belongs to the antenna complex alpha subunit family. The core complex is formed by different alpha and beta chains, binding bacteriochlorophyll molecules, and arranged most probably in tetrameric structures disposed around the reaction center. The non-pigmented gamma chains may constitute additional components.

The protein localises to the cell inner membrane. Antenna complexes are light-harvesting systems, which transfer the excitation energy to the reaction centers. This chain is Light-harvesting protein B-800-850 alpha chain A (pucAA), found in Rhodopseudomonas palustris (strain ATCC BAA-98 / CGA009).